Reading from the N-terminus, the 369-residue chain is Allantoicase (369 aa).

Residues 341–369 are disordered; that stretch reads PDSKNNNNNNNNNNNNNTSNSFKTSDRQQ. The segment covering 345–357 has biased composition (low complexity); that stretch reads NNNNNNNNNNNNN.

Belongs to the allantoicase family.

It carries out the reaction allantoate + H2O = (S)-ureidoglycolate + urea. It functions in the pathway nitrogen metabolism; (S)-allantoin degradation; (S)-ureidoglycolate from allantoate (aminidohydrolase route): step 1/1. Functionally, utilization of purines as secondary nitrogen sources, when primary sources are limiting. In Dictyostelium discoideum (Social amoeba), this protein is Allantoicase (allC).